Consider the following 200-residue polypeptide: NADH-quinone oxidoreductase subunit C (200 aa).

It belongs to the complex I 30 kDa subunit family. As to quaternary structure, NDH-1 is composed of 14 different subunits. Subunits NuoB, C, D, E, F, and G constitute the peripheral sector of the complex.

The protein localises to the cell inner membrane. The catalysed reaction is a quinone + NADH + 5 H(+)(in) = a quinol + NAD(+) + 4 H(+)(out). Its function is as follows. NDH-1 shuttles electrons from NADH, via FMN and iron-sulfur (Fe-S) centers, to quinones in the respiratory chain. The immediate electron acceptor for the enzyme in this species is believed to be ubiquinone. Couples the redox reaction to proton translocation (for every two electrons transferred, four hydrogen ions are translocated across the cytoplasmic membrane), and thus conserves the redox energy in a proton gradient. This chain is NADH-quinone oxidoreductase subunit C, found in Paraburkholderia xenovorans (strain LB400).